Reading from the N-terminus, the 457-residue chain is tRNA-2-methylthio-N(6)-dimethylallyladenosine synthase (457 aa).

Residues 8 to 123 (KKVFIKTFGC…LPEMLARRDA (116 aa)) form the MTTase N-terminal domain. [4Fe-4S] cluster contacts are provided by cysteine 17, cysteine 54, cysteine 86, cysteine 160, cysteine 164, and cysteine 167. In terms of domain architecture, Radical SAM core spans 146 to 379 (RVDGATAFVS…QEAIEANGRR (234 aa)). Residues 382–449 (QSRVGTVQRI…PHSLRGEVLL (68 aa)) enclose the TRAM domain.

The protein belongs to the methylthiotransferase family. MiaB subfamily. As to quaternary structure, monomer. Requires [4Fe-4S] cluster as cofactor.

The protein localises to the cytoplasm. The catalysed reaction is N(6)-dimethylallyladenosine(37) in tRNA + (sulfur carrier)-SH + AH2 + 2 S-adenosyl-L-methionine = 2-methylsulfanyl-N(6)-dimethylallyladenosine(37) in tRNA + (sulfur carrier)-H + 5'-deoxyadenosine + L-methionine + A + S-adenosyl-L-homocysteine + 2 H(+). Catalyzes the methylthiolation of N6-(dimethylallyl)adenosine (i(6)A), leading to the formation of 2-methylthio-N6-(dimethylallyl)adenosine (ms(2)i(6)A) at position 37 in tRNAs that read codons beginning with uridine. This Methylibium petroleiphilum (strain ATCC BAA-1232 / LMG 22953 / PM1) protein is tRNA-2-methylthio-N(6)-dimethylallyladenosine synthase.